Consider the following 392-residue polypeptide: Phosphoglycerate kinase (392 aa).

Residues 21 to 23 (DMN), R36, 59 to 62 (HLGR), R114, and R147 contribute to the substrate site. Residues K198, E320, and 346-349 (GGDT) contribute to the ATP site.

It belongs to the phosphoglycerate kinase family. As to quaternary structure, monomer.

Its subcellular location is the cytoplasm. The enzyme catalyses (2R)-3-phosphoglycerate + ATP = (2R)-3-phospho-glyceroyl phosphate + ADP. It functions in the pathway carbohydrate degradation; glycolysis; pyruvate from D-glyceraldehyde 3-phosphate: step 2/5. In Neisseria meningitidis serogroup C / serotype 2a (strain ATCC 700532 / DSM 15464 / FAM18), this protein is Phosphoglycerate kinase.